We begin with the raw amino-acid sequence, 287 residues long: 33 kDa chaperonin (287 aa).

Disulfide bonds link C231–C233 and C264–C267.

Belongs to the HSP33 family. In terms of processing, under oxidizing conditions two disulfide bonds are formed involving the reactive cysteines. Under reducing conditions zinc is bound to the reactive cysteines and the protein is inactive.

Its subcellular location is the cytoplasm. Functionally, redox regulated molecular chaperone. Protects both thermally unfolding and oxidatively damaged proteins from irreversible aggregation. Plays an important role in the bacterial defense system toward oxidative stress. The chain is 33 kDa chaperonin from Thermosipho melanesiensis (strain DSM 12029 / CIP 104789 / BI429).